Here is a 345-residue protein sequence, read N- to C-terminus: Neurotrimin (345 aa).

An N-terminal signal peptide occupies residues Met-1–Pro-30. Ig-like C2-type domains follow at residues Pro-39–Ser-126, Pro-136–Thr-218, and Pro-222–Thr-309. N-linked (GlcNAc...) asparagine glycans are attached at residues Asn-44, Asn-70, and Asn-152. A disulfide bridge links Cys-57 with Cys-115. Intrachain disulfides connect Cys-157-Cys-201 and Cys-243-Cys-295. Residues Asn-284, Asn-292, Asn-305, and Asn-321 are each glycosylated (N-linked (GlcNAc...) asparagine). Asn-321 carries GPI-anchor amidated asparagine lipidation. A propeptide spans Gly-322–Phe-345 (removed in mature form).

Belongs to the immunoglobulin superfamily. IgLON family.

It localises to the cell membrane. Functionally, neural cell adhesion molecule. The polypeptide is Neurotrimin (NTM) (Bos taurus (Bovine)).